We begin with the raw amino-acid sequence, 146 residues long: UPF0735 ACT domain-containing protein TTE2621 (146 aa).

The region spanning 71–146 (TFSMVLEHMP…GVRKIEVLGE (76 aa)) is the ACT domain.

The protein belongs to the UPF0735 family.

The polypeptide is UPF0735 ACT domain-containing protein TTE2621 (Caldanaerobacter subterraneus subsp. tengcongensis (strain DSM 15242 / JCM 11007 / NBRC 100824 / MB4) (Thermoanaerobacter tengcongensis)).